The following is a 290-amino-acid chain: Eukaryotic translation initiation factor 3 subunit G (290 aa).

The tract at residues 1-34 (MSRLGNRAADWADDEEFDDPSALPAQQVTTNKDG) is disordered. An RRM domain is found at 210-288 (ATLRVTNVSE…LILRVEFAKR (79 aa)).

It belongs to the eIF-3 subunit G family. Component of the eukaryotic translation initiation factor 3 (eIF-3) complex.

It is found in the cytoplasm. RNA-binding component of the eukaryotic translation initiation factor 3 (eIF-3) complex, which is involved in protein synthesis of a specialized repertoire of mRNAs and, together with other initiation factors, stimulates binding of mRNA and methionyl-tRNAi to the 40S ribosome. The eIF-3 complex specifically targets and initiates translation of a subset of mRNAs involved in cell proliferation. This subunit can bind 18S rRNA. The chain is Eukaryotic translation initiation factor 3 subunit G (tif35) from Aspergillus fumigatus (strain CBS 144.89 / FGSC A1163 / CEA10) (Neosartorya fumigata).